Here is a 205-residue protein sequence, read N- to C-terminus: Small ribosomal subunit protein uS4 (205 aa).

The segment at 1 to 46 is disordered; it reads MSKRHSAKYKIDRRMGENLWGRPKSPVNSRSYGPGQHGQRRKSKVS. Residues 94-154 enclose the S4 RNA-binding domain; the sequence is SRLDAIVYRA…EKSRNMALVL (61 aa).

Belongs to the universal ribosomal protein uS4 family. Part of the 30S ribosomal subunit. Contacts protein S5. The interaction surface between S4 and S5 is involved in control of translational fidelity.

One of the primary rRNA binding proteins, it binds directly to 16S rRNA where it nucleates assembly of the body of the 30S subunit. Its function is as follows. With S5 and S12 plays an important role in translational accuracy. This chain is Small ribosomal subunit protein uS4, found in Caulobacter vibrioides (strain ATCC 19089 / CIP 103742 / CB 15) (Caulobacter crescentus).